We begin with the raw amino-acid sequence, 111 residues long: Aspartate 1-decarboxylase (111 aa).

Residue S25 is the Schiff-base intermediate with substrate; via pyruvic acid of the active site. Residue S25 is modified to Pyruvic acid (Ser). T57 provides a ligand contact to substrate. Catalysis depends on Y58, which acts as the Proton donor. G73 to A75 is a substrate binding site.

The protein belongs to the PanD family. Heterooctamer of four alpha and four beta subunits. The cofactor is pyruvate. Is synthesized initially as an inactive proenzyme, which is activated by self-cleavage at a specific serine bond to produce a beta-subunit with a hydroxyl group at its C-terminus and an alpha-subunit with a pyruvoyl group at its N-terminus.

The protein resides in the cytoplasm. It carries out the reaction L-aspartate + H(+) = beta-alanine + CO2. The protein operates within cofactor biosynthesis; (R)-pantothenate biosynthesis; beta-alanine from L-aspartate: step 1/1. Catalyzes the pyruvoyl-dependent decarboxylation of aspartate to produce beta-alanine. In Francisella tularensis subsp. novicida (strain U112), this protein is Aspartate 1-decarboxylase.